Here is a 156-residue protein sequence, read N- to C-terminus: Deoxyuridine 5'-triphosphate nucleotidohydrolase (156 aa).

Substrate contacts are provided by residues 76–78 (RSG), N89, 93–95 (TVD), and K103.

This sequence belongs to the dUTPase family. Requires Mg(2+) as cofactor.

The catalysed reaction is dUTP + H2O = dUMP + diphosphate + H(+). It participates in pyrimidine metabolism; dUMP biosynthesis; dUMP from dCTP (dUTP route): step 2/2. In terms of biological role, this enzyme is involved in nucleotide metabolism: it produces dUMP, the immediate precursor of thymidine nucleotides and it decreases the intracellular concentration of dUTP so that uracil cannot be incorporated into DNA. The protein is Deoxyuridine 5'-triphosphate nucleotidohydrolase of Rhizobium rhizogenes (strain K84 / ATCC BAA-868) (Agrobacterium radiobacter).